A 95-amino-acid chain; its full sequence is MTKDRRAALVRITGRVQGVCFRDWTREEAERLGLDGWVRNESDGSVTALIAGPDGAVSRMLDHFWKGPPGASVADVASEEASSAEAPAGFRITRG.

In terms of domain architecture, Acylphosphatase-like spans 7 to 94 (AALVRITGRV…EAPAGFRITR (88 aa)). Residues Arg22 and Asn40 contribute to the active site. The segment covering 76–88 (VASEEASSAEAPA) has biased composition (low complexity). Residues 76–95 (VASEEASSAEAPAGFRITRG) are disordered.

The protein belongs to the acylphosphatase family.

It carries out the reaction an acyl phosphate + H2O = a carboxylate + phosphate + H(+). This chain is Acylphosphatase (acyP), found in Rhizobium meliloti (strain 1021) (Ensifer meliloti).